The chain runs to 247 residues: MRQMIVGNWKMNGLGAPSRDLVGEIAEGLATIPSPPQVVVCPPFTQLAGIGPLLKGSGIALGAQDCHQAASGAHTGDISAAMLADLGVEYVVLGHSERRRDHGELDETVREKTQTALAAGLTPIVCIGETGDQKASGESRDAIGWQIQGSLPDGFSGVVAYEPVWAIGSGNPAASQDIADMMGFIRAELVRQFGAAGKTIRILYGGSVNGRDAASILPIAEVGGALVGSASLQADTFLPIVRAAVDL.

Residue 8–10 coordinates substrate; sequence NWK. Residue H95 is the Electrophile of the active site. Residue E162 is the Proton acceptor of the active site. Substrate-binding residues include G168 and S207.

The protein belongs to the triosephosphate isomerase family. In terms of assembly, homodimer.

It is found in the cytoplasm. The catalysed reaction is D-glyceraldehyde 3-phosphate = dihydroxyacetone phosphate. It participates in carbohydrate biosynthesis; gluconeogenesis. The protein operates within carbohydrate degradation; glycolysis; D-glyceraldehyde 3-phosphate from glycerone phosphate: step 1/1. In terms of biological role, involved in the gluconeogenesis. Catalyzes stereospecifically the conversion of dihydroxyacetone phosphate (DHAP) to D-glyceraldehyde-3-phosphate (G3P). This is Triosephosphate isomerase from Gluconacetobacter diazotrophicus (strain ATCC 49037 / DSM 5601 / CCUG 37298 / CIP 103539 / LMG 7603 / PAl5).